The sequence spans 766 residues: MAKETFSIEFAGRTLTVETGQVAKQANGAVVVRYGDTTVLTAATMGKMATGDFFPLQVNYEEKMYAAGKFPGGFNKREARPSTDATLTARLIDRPIRPMFAEGFRNEVQVINTVLSYDENASGRVAAMFGSSLALAISDIPFDGPIAGVEVAYIDGKYIINPTVAEKEASSLELSVAGNINAINMVESGAKELSEEVMLGALLAGHNAVKELIEFQNEIVAKVGKEKAEVELLHVDEDLKAEVIAAYNSDLQKAVQVEEKLAREAATKAVKEAIISVYSAKYENDENLSIILRDLAEILEGMEHAEVRRLITEDKIRPDGRKIDEIRPLDAEIDFTPRSITHGTGLFTRGQTQALSTLTLAPMNEAQIIDGLNDEYKKRFMHHYNFPQYSVGETGRYGAPGRREIGHGALGERALEQVLPSLEEFPYAIRLVAEVLESNGSSSQASICAGTLALMAGGVPIKAPVAGIAMGLISDGTNYTVLTDIQGLEDHFGDMDFKVAGTREGITALQMDIKISGITPEILAEALAQAKTARFQILDVIEATIAQPREELAPSAPKIDTITIPVDKIKVVIGKGGEQIDKIIAETGVKIDIDDEGLCSIFSSDQSAIDRAKEIIAELVREAKVGEVYEAKVVRIESFGAFVNLFGKQDAMVHISEMAWARTAKVEDVMKLGDVVKVKIMKIDDKGRVDASMRALIEKPEGYVEPERKPRERRDNKDRRNGNGFDRRNNDRNNHNNNSGNHSFELRERKSHVDHEFPELSTKKPE.

The Mg(2+) site is built by D490 and D496. Residues 557–616 (PKIDTITIPVDKIKVVIGKGGEQIDKIIAETGVKIDIDDEGLCSIFSSDQSAIDRAKEII) enclose the KH domain. One can recognise an S1 motif domain in the interval 626–694 (GEVYEAKVVR…DKGRVDASMR (69 aa)). Basic and acidic residues-rich tracts occupy residues 700–734 (PEGYVEPERKPRERRDNKDRRNGNGFDRRNNDRNN) and 744–766 (FELRERKSHVDHEFPELSTKKPE). Residues 700-766 (PEGYVEPERK…FPELSTKKPE (67 aa)) form a disordered region.

This sequence belongs to the polyribonucleotide nucleotidyltransferase family. Mg(2+) serves as cofactor.

It is found in the cytoplasm. It catalyses the reaction RNA(n+1) + phosphate = RNA(n) + a ribonucleoside 5'-diphosphate. Involved in mRNA degradation. Catalyzes the phosphorolysis of single-stranded polyribonucleotides processively in the 3'- to 5'-direction. This is Polyribonucleotide nucleotidyltransferase from Lactococcus lactis subsp. cremoris (strain MG1363).